A 121-amino-acid polypeptide reads, in one-letter code: Small ribosomal subunit protein bS16 (121 aa).

The tract at residues 88 to 121 (GKAKLEKEKKAKAKTKEEENEGSKTESGSNEAES) is disordered. Residues 90-111 (AKLEKEKKAKAKTKEEENEGSK) show a composition bias toward basic and acidic residues. The span at 112 to 121 (TESGSNEAES) shows a compositional bias: polar residues.

It belongs to the bacterial ribosomal protein bS16 family.

This chain is Small ribosomal subunit protein bS16, found in Prochlorococcus marinus (strain MIT 9215).